Here is a 771-residue protein sequence, read N- to C-terminus: 5-methyltetrahydropteroyltriglutamate--homocysteine methyltransferase (771 aa).

5-methyltetrahydropteroyltri-L-glutamate is bound by residues 16-19 (RELK) and Lys117. Residues 443–445 (IGS) and Glu496 contribute to the L-homocysteine site. L-methionine contacts are provided by residues 443–445 (IGS) and Glu496. Residues 527–528 (RC) and Trp573 contribute to the 5-methyltetrahydropteroyltri-L-glutamate site. An L-homocysteine-binding site is contributed by Asp611. Asp611 is a binding site for L-methionine. Glu617 is a 5-methyltetrahydropteroyltri-L-glutamate binding site. Zn(2+)-binding residues include His653, Cys655, and Glu677. The active-site Proton donor is the His706. Residue Cys738 coordinates Zn(2+).

Belongs to the vitamin-B12 independent methionine synthase family. The cofactor is Zn(2+).

It carries out the reaction 5-methyltetrahydropteroyltri-L-glutamate + L-homocysteine = tetrahydropteroyltri-L-glutamate + L-methionine. Its pathway is amino-acid biosynthesis; L-methionine biosynthesis via de novo pathway; L-methionine from L-homocysteine (MetE route): step 1/1. In terms of biological role, catalyzes the transfer of a methyl group from 5-methyltetrahydrofolate to homocysteine resulting in methionine formation. This is 5-methyltetrahydropteroyltriglutamate--homocysteine methyltransferase from Stutzerimonas stutzeri (strain A1501) (Pseudomonas stutzeri).